The sequence spans 339 residues: UDP-N-acetylenolpyruvoylglucosamine reductase (339 aa).

The region spanning 18-189 (GVEVKAKWFA…LRVRFALNRV (172 aa)) is the FAD-binding PCMH-type domain. Arg166 is a catalytic residue. Ser239 (proton donor) is an active-site residue. Glu335 is an active-site residue.

Belongs to the MurB family. It depends on FAD as a cofactor.

It is found in the cytoplasm. It carries out the reaction UDP-N-acetyl-alpha-D-muramate + NADP(+) = UDP-N-acetyl-3-O-(1-carboxyvinyl)-alpha-D-glucosamine + NADPH + H(+). It participates in cell wall biogenesis; peptidoglycan biosynthesis. Cell wall formation. The polypeptide is UDP-N-acetylenolpyruvoylglucosamine reductase (Pseudomonas fluorescens (strain ATCC BAA-477 / NRRL B-23932 / Pf-5)).